The chain runs to 3333 residues: Laminin subunit alpha-3 (3333 aa).

An N-terminal signal peptide occupies residues 1-35 (MAAAARPRGRALGPVLPPTPLLLLVLRVLPACGAT). Positions 43–298 (AGLSLHPTYF…SIKDISIGGQ (256 aa)) constitute a Laminin N-terminal domain. N-linked (GlcNAc...) asparagine glycans are attached at residues asparagine 142 and asparagine 242. The segment at 298–728 (QCVCNGHAEV…NNYYFPDLHH (431 aa)) is domain V. Cystine bridges form between cysteine 299–cysteine 308, cysteine 301–cysteine 319, cysteine 321–cysteine 330, cysteine 333–cysteine 353, cysteine 356–cysteine 365, cysteine 358–cysteine 390, cysteine 393–cysteine 402, cysteine 405–cysteine 423, cysteine 426–cysteine 436, cysteine 428–cysteine 443, cysteine 445–cysteine 454, cysteine 457–cysteine 467, cysteine 491–cysteine 503, cysteine 493–cysteine 509, cysteine 511–cysteine 520, cysteine 523–cysteine 533, cysteine 536–cysteine 548, cysteine 538–cysteine 555, cysteine 557–cysteine 566, cysteine 569–cysteine 586, cysteine 601–cysteine 610, cysteine 613–cysteine 628, cysteine 631–cysteine 645, cysteine 633–cysteine 652, cysteine 654–cysteine 663, cysteine 666–cysteine 681, cysteine 684–cysteine 696, cysteine 686–cysteine 703, and cysteine 705–cysteine 714. 8 consecutive Laminin EGF-like domains span residues 299–355 (CVCN…ECEA), 356–425 (CNCH…GCIP), 426–469 (CSCD…FCLR), 491–535 (CDCN…ICQA), 536–588 (CWCS…ACDP), 590–630 (GTIN…GCSE), 631–683 (CKCH…GCQG), and 684–728 (CQCD…DLHH). The segment at 796-1265 (TEAVSGHITI…VAFYHKGALP (470 aa)) is domain IV 1 (domain IV B). Intrachain disulfides connect cysteine 1266-cysteine 1278, cysteine 1268-cysteine 1285, cysteine 1287-cysteine 1296, cysteine 1299-cysteine 1309, cysteine 1312-cysteine 1319, cysteine 1314-cysteine 1326, cysteine 1328-cysteine 1337, cysteine 1340-cysteine 1353, cysteine 1356-cysteine 1371, cysteine 1358-cysteine 1378, cysteine 1380-cysteine 1389, cysteine 1392-cysteine 1402, cysteine 1405-cysteine 1417, cysteine 1407-cysteine 1424, cysteine 1426-cysteine 1435, and cysteine 1438-cysteine 1453. Laminin EGF-like domains lie at 1266-1311 (CECH…RCKP), 1312-1355 (CSCG…GCEG), 1356-1404 (CNCS…ECVP), and 1405-1455 (CNCN…GCTS). Residues 1266-1465 (CECHPTGATG…CFCFGVNNQC (200 aa)) form a domain III B region. The 178-residue stretch at 1476-1653 (VDMLGWHLET…SGRIALAVEI (178 aa)) folds into the Laminin IV type A domain. Residues 1654 to 1821 (CACPPAYAGD…DSSPAEECDD (168 aa)) are domain III A. 8 disulfides stabilise this stretch: cysteine 1687–cysteine 1696, cysteine 1689–cysteine 1703, cysteine 1706–cysteine 1715, cysteine 1718–cysteine 1731, cysteine 1734–cysteine 1746, cysteine 1736–cysteine 1755, cysteine 1757–cysteine 1766, and cysteine 1769–cysteine 1784. Laminin EGF-like domains are found at residues 1687–1733 (CNCN…SCRA) and 1734–1786 (CPCP…SCQP). The region spanning 1787–1821 (CSCNSNGQLGSCHPLTGDCINQEPKDSSPAEECDD) is the Laminin EGF-like 15; truncated domain. Residues 1822–2389 (CDSCVMTLLN…ARDAASKVAV (568 aa)) are domain II and I. 2 coiled-coil regions span residues 1852–1941 (ASAG…KNVI) and 1987–2169 (KHLR…DELV). The short motif at 2278-2280 (RGD) is the Cell attachment site element. The stretch at 2322-2388 (RTQNEDFKKA…QARDAASKVA (67 aa)) forms a coiled coil. Asparagine 2365, asparagine 2502, and asparagine 2584 each carry an N-linked (GlcNAc...) asparagine glycan. Laminin G-like domains are found at residues 2390–2591 (PMRF…VEPC), 2598–2760 (SDKN…TKKC), 2767–2927 (VRSA…LGGC), 2986–3150 (ALQF…VSSC), and 3157–3330 (KGIY…LNGC). 5 disulfide bridges follow: cysteine 2561–cysteine 2591, cysteine 2737–cysteine 2760, cysteine 2895–cysteine 2927, cysteine 3127–cysteine 3150, and cysteine 3302–cysteine 3330.

In terms of assembly, laminin is a complex glycoprotein, consisting of three different polypeptide chains (alpha, beta, gamma), which are bound to each other by disulfide bonds into a cross-shaped molecule comprising one long and three short arms with globules at each end. Alpha-3 is a subunit of laminin-5 (laminin-332 or epiligrin/kalinin/nicein), laminin-6 (laminin-311 or K-laminin) and laminin-7 (laminin-321 or KS-laminin). Skin; respiratory, urinary, and digestive epithelia and in other specialized tissues with prominent secretory or protective functions. Epithelial basement membrane, and epithelial cell tongue that migrates into a wound bed. A differential and focal expression of the subunit alpha-3 is observed in the CNS.

It localises to the secreted. The protein localises to the extracellular space. It is found in the extracellular matrix. Its subcellular location is the basement membrane. Binding to cells via a high affinity receptor, laminin is thought to mediate the attachment, migration and organization of cells into tissues during embryonic development by interacting with other extracellular matrix components. In terms of biological role, laminin-5 is thought to be involved in (1) cell adhesion via integrin alpha-3/beta-1 in focal adhesion and integrin alpha-6/beta-4 in hemidesmosomes, (2) signal transduction via tyrosine phosphorylation of pp125-FAK and p80, (3) differentiation of keratinocytes. The chain is Laminin subunit alpha-3 (LAMA3) from Homo sapiens (Human).